A 202-amino-acid polypeptide reads, in one-letter code: uncharacterized protein (202 aa).

Residues 175-195 (INTGIALFIILTSLLVYFIQF) traverse the membrane as a helical segment.

It is found in the membrane. This is an uncharacterized protein from Dictyostelium discoideum (Social amoeba).